Consider the following 147-residue polypeptide: RxLR effector protein Avr3a (147 aa).

The N-terminal stretch at methionine 1–alanine 21 is a signal peptide. Residues arginine 44–arginine 59 carry the RxLR-dEER motif. An N6-acetyllysine modification is found at lysine 48. The interval alanine 77–tyrosine 147 is effector domain.

This sequence belongs to the RxLR effector family. In terms of assembly, forms homodimers via the RxLR-dEER motif. Interacts with host E3 ligase CMPG1. Interacts with host DRP2. Proteolytically cleaved. The cleavage site directly after the RxLR sequence and the high conservation among other effector proteins suggest that the RxLR motif might play a crucial role in the intracellular processing before secretion. Post-translationally, glycosylated. In terms of processing, N-acetylated at Lys-48 after cleavage.

It localises to the secreted. Its subcellular location is the host cytoplasm. Its function is as follows. Multifunctional effector that can suppress host BAK1/SERK3-mediated immunity through at least two different pathways. Manipulates plant immunity by targeting and stabilizing host E3 ligase CMPG1. Preventing the normal 26S proteasome-dependent degradation of potato CMPG1, and thus potentially of its protein substrates in the host cell, further abolishes host cell death during the biotrophic phase of infection. Also associates with and affects the function of the dynamin-related protein 2 (DRP2), a plant GTPase involved in immune receptor-mediated endocytosis. The Avr3a(EM) form evades recognition by R3a, thus does not trigger R3a-mediated hypersensitivity and does not suppress INF1-induced cell death. The chain is RxLR effector protein Avr3a from Phytophthora infestans (Potato late blight agent).